A 135-amino-acid polypeptide reads, in one-letter code: Ribosome-binding factor A (135 aa).

This sequence belongs to the RbfA family. In terms of assembly, monomer. Binds 30S ribosomal subunits, but not 50S ribosomal subunits or 70S ribosomes.

It localises to the cytoplasm. One of several proteins that assist in the late maturation steps of the functional core of the 30S ribosomal subunit. Associates with free 30S ribosomal subunits (but not with 30S subunits that are part of 70S ribosomes or polysomes). Required for efficient processing of 16S rRNA. May interact with the 5'-terminal helix region of 16S rRNA. This chain is Ribosome-binding factor A, found in Rhodopseudomonas palustris (strain HaA2).